Here is a 1288-residue protein sequence, read N- to C-terminus: MASVAWAVLKVLLLLPTQTWSPVGAGNPPDCDAPLASALPRSSFSSSSELSSSHGPGFSRLNRRDGAGGWTPLVSNKYQWLQIDLGERMEVTAVATQGGYGSSDWVTSYLLMFSDGGRNWKQYRREESIWGFPGNTNADSVVHYRLQPPFEARFLRFLPLAWNPRGRIGMRIEVYGCAYKSEVVYFDGQSALLYRLDKKPLKPIRDVISLKFKAMQSNGILLHREGQHGNHITLELIKGKLVFFLNSGNAKLPSTIAPVTLTLGSLLDDQHWHSVLIELLDTQVNFTVDKHTHHFQAKGDSSYLDLNFEISFGGIPTPGRSRAFRRKSFHGCLENLYYNGVDVTELAKKHKPQILMMGNVSFSCPQPQTVPVTFLSSRSYLALPGNSGEDKVSVTFQFRTWNRAGHLLFGELRRGSGSFVLFLKDGKLKLSLFQPGQSPRNVTAGAGLNDGQWHSVSFSAKWSHMNVVVDDDTAVQPLVAVLIDSGDTYYFGGCLDNSSGSGCKSPLGGFQGCLRLITIGDKAVDPILVQQGALGSFRDLQIDSCGITDRCLPSYCEHGGECSQSWDTFSCDCLGTGYTGETCHSSLYEQSCEAHKHRGNPSGLYYIDADGSGPLGPFLVYCNMTADAAWTVVQHGGPDAVTLRGAPSGHPRSAVSFAYAAGAGQLRSAVNLAERCEQRLALRCGTARRPDSRDGTPLSWWVGRTNETHTSWGGSLPDAQKCTCGLEGNCIDSQYYCNCDAGRNEWTSDTIVLSQKEHLPVTQIVMTDAGRPHSEAAYTLGPLLCRGDQSFWNSASFNTETSYLHFPAFHGELTADVCFFFKTTVSSGVFMENLGITDFIRIELRAPTEVTFSFDVGNGPCEVTVQSPTPFNDNQWHHVRAERNVKGASLQVDQLPQKMQPAPADGHVRLQLNSQLFIGGTATRQRGFLGCIRSLQLNGVALDLEERATVTPGVEPGCAGHCSTYGHLCRNGGRCREKRRGVTCDCAFSAYDGPFCSNEISAYFATGSSMTYHFQEHYTLSENSSSLVSSLHRDVTLTREMITLSFRTTRTPSLLLYVSSFYEEYLSVILANNGSLQIRYKLDRHQNPDAFTFDFKNMADGQLHQVKINREEAVVMVEVNQSTKKQVILSSGTEFNAVKSLILGKVLEAAGADPDTRRAATSGFTGCLSAVRFGRAAPLKAALRPSGPSRVTVRGHVAPMARCAAGAASGSPARELAPRLAGGAGRSGPADEGEPLVNADRRDSAVIGGVIAVVIFILLCITAIAIRIYQQRKLRKENESKVSKKEEC.

The first 25 residues, 1-25 (MASVAWAVLKVLLLLPTQTWSPVGA), serve as a signal peptide directing secretion. Over 26-1245 (GNPPDCDAPL…LVNADRRDSA (1220 aa)) the chain is Extracellular. The F5/8 type C domain maps to 31–177 (CDAPLASALP…IGMRIEVYGC (147 aa)). Cys31 and Cys177 form a disulfide bridge. Laminin G-like domains lie at 183 to 364 (VVYF…SFSC) and 370 to 545 (VPVT…IDSC). Residues Asn285, Asn359, Asn441, and Asn497 are each glycosylated (N-linked (GlcNAc...) asparagine). A disulfide bond links Cys332 and Cys364. Disulfide bonds link Cys513–Cys545, Cys551–Cys562, Cys556–Cys571, and Cys573–Cys583. One can recognise an EGF-like 1 domain in the interval 551–583 (CLPSYCEHGGECSQSWDTFSCDCLGTGYTGETC). A Fibrinogen C-terminal domain is found at 584-792 (HSSLYEQSCE…LLCRGDQSFW (209 aa)). Residues Asn623 and Asn706 are each glycosylated (N-linked (GlcNAc...) asparagine). Residues 793 to 958 (NSASFNTETS…TVTPGVEPGC (166 aa)) form the Laminin G-like 3 domain. Intrachain disulfides connect Cys931/Cys958, Cys962/Cys975, Cys969/Cys984, and Cys986/Cys996. Residues 962–996 (CSTYGHLCRNGGRCREKRRGVTCDCAFSAYDGPFC) enclose the EGF-like 2 domain. A Laminin G-like 4 domain is found at 1015-1203 (QEHYTLSENS…RGHVAPMARC (189 aa)). Asn1023, Asn1073, and Asn1120 each carry an N-linked (GlcNAc...) asparagine glycan. A disulfide bridge connects residues Cys1167 and Cys1203. The disordered stretch occupies residues 1215 to 1236 (ELAPRLAGGAGRSGPADEGEPL). The helical transmembrane segment at 1246 to 1266 (VIGGVIAVVIFILLCITAIAI) threads the bilayer. Residues 1267–1288 (RIYQQRKLRKENESKVSKKEEC) are Cytoplasmic-facing.

This sequence belongs to the neurexin family.

It localises to the cell membrane. It is found in the secreted. The protein is Contactin-associated protein-like 3 (CNTNAP3) of Homo sapiens (Human).